Here is a 302-residue protein sequence, read N- to C-terminus: Aspartate carbamoyltransferase catalytic subunit (302 aa).

Carbamoyl phosphate contacts are provided by arginine 54 and threonine 55. Lysine 82 contacts L-aspartate. The carbamoyl phosphate site is built by arginine 104, histidine 132, and glutamine 135. 2 residues coordinate L-aspartate: arginine 165 and arginine 217. Residues glycine 257 and proline 258 each contribute to the carbamoyl phosphate site.

This sequence belongs to the aspartate/ornithine carbamoyltransferase superfamily. ATCase family. As to quaternary structure, heterododecamer (2C3:3R2) of six catalytic PyrB chains organized as two trimers (C3), and six regulatory PyrI chains organized as three dimers (R2).

The catalysed reaction is carbamoyl phosphate + L-aspartate = N-carbamoyl-L-aspartate + phosphate + H(+). It participates in pyrimidine metabolism; UMP biosynthesis via de novo pathway; (S)-dihydroorotate from bicarbonate: step 2/3. Functionally, catalyzes the condensation of carbamoyl phosphate and aspartate to form carbamoyl aspartate and inorganic phosphate, the committed step in the de novo pyrimidine nucleotide biosynthesis pathway. The sequence is that of Aspartate carbamoyltransferase catalytic subunit from Thermus thermophilus (strain ATCC BAA-163 / DSM 7039 / HB27).